A 418-amino-acid chain; its full sequence is Dihydrofolate synthase/folylpolyglutamate synthase (418 aa).

53–56 (GKGT) lines the ATP pocket. S77 lines the Mg(2+) pocket. 116 to 119 (TYFE) lines the 7,8-dihydropteroate pocket. E140 lines the Mg(2+) pocket. 147-149 (LDA) serves as a coordination point for 7,8-dihydropteroate. H167 provides a ligand contact to Mg(2+). Residues N252, R284, and D297 each contribute to the ATP site.

The protein belongs to the folylpolyglutamate synthase family. Monomer. Mg(2+) serves as cofactor.

It catalyses the reaction 7,8-dihydropteroate + L-glutamate + ATP = 7,8-dihydrofolate + ADP + phosphate + H(+). The catalysed reaction is (6S)-5,6,7,8-tetrahydrofolyl-(gamma-L-Glu)(n) + L-glutamate + ATP = (6S)-5,6,7,8-tetrahydrofolyl-(gamma-L-Glu)(n+1) + ADP + phosphate + H(+). It carries out the reaction 10-formyltetrahydrofolyl-(gamma-L-Glu)(n) + L-glutamate + ATP = 10-formyltetrahydrofolyl-(gamma-L-Glu)(n+1) + ADP + phosphate + H(+). The enzyme catalyses (6R)-5,10-methylenetetrahydrofolyl-(gamma-L-Glu)(n) + L-glutamate + ATP = (6R)-5,10-methylenetetrahydrofolyl-(gamma-L-Glu)(n+1) + ADP + phosphate + H(+). It functions in the pathway cofactor biosynthesis; tetrahydrofolate biosynthesis; 7,8-dihydrofolate from 2-amino-4-hydroxy-6-hydroxymethyl-7,8-dihydropteridine diphosphate and 4-aminobenzoate: step 2/2. The protein operates within cofactor biosynthesis; tetrahydrofolylpolyglutamate biosynthesis. Functions in two distinct reactions of the de novo folate biosynthetic pathway. Catalyzes the addition of a glutamate residue to dihydropteroate (7,8-dihydropteroate or H2Pte) to form dihydrofolate (7,8-dihydrofolate monoglutamate or H2Pte-Glu). Also catalyzes successive additions of L-glutamate to tetrahydrofolate or 10-formyltetrahydrofolate or 5,10-methylenetetrahydrofolate, leading to folylpolyglutamate derivatives. The chain is Dihydrofolate synthase/folylpolyglutamate synthase (folC) from Buchnera aphidicola subsp. Schizaphis graminum (strain Sg).